The chain runs to 305 residues: Cytochrome c biogenesis protein CcsA (305 aa).

The next 8 membrane-spanning stretches (helical) occupy residues Gly-11–Val-31, Thr-37–Leu-57, Gly-63–Leu-83, Ile-96–Leu-116, Val-141–Leu-161, Thr-212–Asn-232, Thr-246–Leu-263, and Val-275–Ile-295.

Belongs to the CcmF/CycK/Ccl1/NrfE/CcsA family. As to quaternary structure, may interact with ccs1.

It localises to the cellular thylakoid membrane. Required during biogenesis of c-type cytochromes (cytochrome c6 and cytochrome f) at the step of heme attachment. In Parasynechococcus marenigrum (strain WH8102), this protein is Cytochrome c biogenesis protein CcsA.